A 245-amino-acid chain; its full sequence is tRNA1(Val) (adenine(37)-N6)-methyltransferase (245 aa).

It belongs to the methyltransferase superfamily. tRNA (adenine-N(6)-)-methyltransferase family.

Its subcellular location is the cytoplasm. It carries out the reaction adenosine(37) in tRNA1(Val) + S-adenosyl-L-methionine = N(6)-methyladenosine(37) in tRNA1(Val) + S-adenosyl-L-homocysteine + H(+). Its function is as follows. Specifically methylates the adenine in position 37 of tRNA(1)(Val) (anticodon cmo5UAC). In Salmonella arizonae (strain ATCC BAA-731 / CDC346-86 / RSK2980), this protein is tRNA1(Val) (adenine(37)-N6)-methyltransferase.